Consider the following 277-residue polypeptide: Large ribosomal subunit protein uL2 (277 aa).

Disordered stretches follow at residues 37–60 (KNST…GHKH) and 223–265 (VVMN…KRTD). Over residues 39–49 (STAGRNSNGHI) the composition is skewed to polar residues. A compositionally biased stretch (basic residues) spans 50 to 60 (TTRHKGGGHKH). Basic and acidic residues predominate over residues 229–244 (DHPHGGGEGRTGEARE).

The protein belongs to the universal ribosomal protein uL2 family. As to quaternary structure, part of the 50S ribosomal subunit. Forms a bridge to the 30S subunit in the 70S ribosome.

In terms of biological role, one of the primary rRNA binding proteins. Required for association of the 30S and 50S subunits to form the 70S ribosome, for tRNA binding and peptide bond formation. It has been suggested to have peptidyltransferase activity; this is somewhat controversial. Makes several contacts with the 16S rRNA in the 70S ribosome. This Neisseria meningitidis serogroup C (strain 053442) protein is Large ribosomal subunit protein uL2.